A 483-amino-acid polypeptide reads, in one-letter code: Aspartyl/glutamyl-tRNA(Asn/Gln) amidotransferase subunit B (483 aa).

This sequence belongs to the GatB/GatE family. GatB subfamily. Heterotrimer of A, B and C subunits.

The catalysed reaction is L-glutamyl-tRNA(Gln) + L-glutamine + ATP + H2O = L-glutaminyl-tRNA(Gln) + L-glutamate + ADP + phosphate + H(+). The enzyme catalyses L-aspartyl-tRNA(Asn) + L-glutamine + ATP + H2O = L-asparaginyl-tRNA(Asn) + L-glutamate + ADP + phosphate + 2 H(+). Functionally, allows the formation of correctly charged Asn-tRNA(Asn) or Gln-tRNA(Gln) through the transamidation of misacylated Asp-tRNA(Asn) or Glu-tRNA(Gln) in organisms which lack either or both of asparaginyl-tRNA or glutaminyl-tRNA synthetases. The reaction takes place in the presence of glutamine and ATP through an activated phospho-Asp-tRNA(Asn) or phospho-Glu-tRNA(Gln). This is Aspartyl/glutamyl-tRNA(Asn/Gln) amidotransferase subunit B from Rickettsia felis (strain ATCC VR-1525 / URRWXCal2) (Rickettsia azadi).